A 242-amino-acid polypeptide reads, in one-letter code: Ubiquinone biosynthesis O-methyltransferase (242 aa).

Residues R44, G64, D85, and M129 each contribute to the S-adenosyl-L-methionine site.

This sequence belongs to the methyltransferase superfamily. UbiG/COQ3 family.

The catalysed reaction is a 3-demethylubiquinol + S-adenosyl-L-methionine = a ubiquinol + S-adenosyl-L-homocysteine + H(+). The enzyme catalyses a 3-(all-trans-polyprenyl)benzene-1,2-diol + S-adenosyl-L-methionine = a 2-methoxy-6-(all-trans-polyprenyl)phenol + S-adenosyl-L-homocysteine + H(+). The protein operates within cofactor biosynthesis; ubiquinone biosynthesis. In terms of biological role, O-methyltransferase that catalyzes the 2 O-methylation steps in the ubiquinone biosynthetic pathway. This Salmonella arizonae (strain ATCC BAA-731 / CDC346-86 / RSK2980) protein is Ubiquinone biosynthesis O-methyltransferase.